Here is a 185-residue protein sequence, read N- to C-terminus: Peptidyl-tRNA hydrolase (185 aa).

Y14 contributes to the tRNA binding site. H19 serves as the catalytic Proton acceptor. Residues Y65, N67, and N113 each contribute to the tRNA site.

The protein belongs to the PTH family. As to quaternary structure, monomer.

The protein resides in the cytoplasm. The enzyme catalyses an N-acyl-L-alpha-aminoacyl-tRNA + H2O = an N-acyl-L-amino acid + a tRNA + H(+). In terms of biological role, hydrolyzes ribosome-free peptidyl-tRNAs (with 1 or more amino acids incorporated), which drop off the ribosome during protein synthesis, or as a result of ribosome stalling. Functionally, catalyzes the release of premature peptidyl moieties from peptidyl-tRNA molecules trapped in stalled 50S ribosomal subunits, and thus maintains levels of free tRNAs and 50S ribosomes. The sequence is that of Peptidyl-tRNA hydrolase from Rickettsia akari (strain Hartford).